Here is a 346-residue protein sequence, read N- to C-terminus: Methionine import ATP-binding protein MetN 1 (346 aa).

Residues 2–241 (IEFKQVTKTF…PQHPTTEKFV (240 aa)) enclose the ABC transporter domain. 38–45 (GFSGAGKS) contacts ATP.

This sequence belongs to the ABC transporter superfamily. Methionine importer (TC 3.A.1.24) family. As to quaternary structure, the complex is composed of two ATP-binding proteins (MetN), two transmembrane proteins (MetI) and a solute-binding protein (MetQ).

The protein resides in the cell membrane. It catalyses the reaction L-methionine(out) + ATP + H2O = L-methionine(in) + ADP + phosphate + H(+). The catalysed reaction is D-methionine(out) + ATP + H2O = D-methionine(in) + ADP + phosphate + H(+). Part of the ABC transporter complex MetNIQ involved in methionine import. Responsible for energy coupling to the transport system. The protein is Methionine import ATP-binding protein MetN 1 of Shouchella clausii (strain KSM-K16) (Alkalihalobacillus clausii).